Consider the following 325-residue polypeptide: Glucosyl-3-phosphoglycerate synthase (325 aa).

Residues 37–41, S71, K104, and 124–125 contribute to the UDP-alpha-D-glucose site; these read PSLNE and DS. D126 contacts Mn(2+). 171-174 serves as a coordination point for (2R)-3-phosphoglycerate; it reads GRVT. Residues 216-219 and 243-248 contribute to the UDP-alpha-D-glucose site; these read YGVE and RIHDNQ. H245 provides a ligand contact to Mn(2+). N247 contacts (2R)-3-phosphoglycerate.

This sequence belongs to the glycosyltransferase 2 family. Homodimer in solution. The cofactor is Co(2+). It depends on Mg(2+) as a cofactor. Requires Mn(2+) as cofactor. Ni(2+) serves as cofactor. Zn(2+) is required as a cofactor.

The enzyme catalyses an NDP-alpha-D-glucose + (2R)-3-phosphoglycerate = (2R)-2-O-(alpha-D-glucopyranosyl)-3-phospho-glycerate + a ribonucleoside 5'-diphosphate + H(+). It carries out the reaction (2R)-3-phosphoglycerate + UDP-alpha-D-glucose = (2R)-2-O-(alpha-D-glucopyranosyl)-3-phospho-glycerate + UDP + H(+). It catalyses the reaction ADP-alpha-D-glucose + (2R)-3-phosphoglycerate = (2R)-2-O-(alpha-D-glucopyranosyl)-3-phospho-glycerate + ADP + H(+). Its activity is regulated as follows. Inhibited by ADP and EDTA. Functionally, involved in the biosynthesis of the compatible solute mannosylglucosylglycerate through a phosphorylating pathway. Catalyzes the transfer of the glucose moiety from a nuleotide sugar such as UDP-alpha-D-glucose to the position 2 of 3-phospho-D-glycerate (3-PGA) to form glucosyl-3-phosphoglycerate (GPG). UDP-glucose is the preferred substrate, but it can be partially replaced by ADP-glucose. The protein is Glucosyl-3-phosphoglycerate synthase of Petrotoga mobilis (strain DSM 10674 / SJ95).